Consider the following 333-residue polypeptide: Isopenicillin N synthase (333 aa).

Residues R87, Y91, and Y191 each coordinate isopenicillin N. Residues R87, Y91, Y191, H216, and D218 each coordinate N-[(5S)-5-amino-5-carboxypentanoyl]-L-cysteinyl-D-valine. In terms of domain architecture, Fe2OG dioxygenase spans D180 to A290. Fe(2+) contacts are provided by H216, D218, and H272. Residue R281 coordinates 2-oxoglutarate. S283 contacts isopenicillin N. Position 283 (S283) interacts with N-[(5S)-5-amino-5-carboxypentanoyl]-L-cysteinyl-D-valine.

The protein belongs to the iron/ascorbate-dependent oxidoreductase family. Fe cation serves as cofactor. L-ascorbate is required as a cofactor.

It carries out the reaction N-[(5S)-5-amino-5-carboxypentanoyl]-L-cysteinyl-D-valine + O2 = isopenicillin N + 2 H2O. Its pathway is antibiotic biosynthesis; penicillin G biosynthesis; penicillin G from L-alpha-aminoadipate and L-cysteine and L-valine: step 2/3. Functionally, removes, in the presence of oxygen, 4 hydrogen atoms from delta-L-(alpha-aminoadipyl)-L-cysteinyl-D-valine (ACV) to form the azetidinone and thiazolidine rings of isopenicillin. The protein is Isopenicillin N synthase (pcbC) of Streptomyces microflavus (Streptomyces lipmanii).